A 498-amino-acid chain; its full sequence is Bifunctional protein GlmU (498 aa).

Residues 1–238 are pyrophosphorylase; it reads MSDAAVVILA…PALVAGVNDR (238 aa). UDP-N-acetyl-alpha-D-glucosamine is bound by residues 9 to 12, K23, Q80, and 85 to 86; these read LAAG and GT. D111 provides a ligand contact to Mg(2+). Residues G148, E163, N178, and N236 each contribute to the UDP-N-acetyl-alpha-D-glucosamine site. N236 serves as a coordination point for Mg(2+). Residues 239-259 are linker; sequence VQLADLGAELNRRVVAAHQRA. Residues 260–498 are N-acetyltransferase; it reads GVTIVDPATT…TAKPAPATGE (239 aa). The UDP-N-acetyl-alpha-D-glucosamine site is built by R341 and K359. H371 acts as the Proton acceptor in catalysis. Residues Y374 and N385 each coordinate UDP-N-acetyl-alpha-D-glucosamine. Residues A388, 394 to 395, S413, and A431 each bind acetyl-CoA; that span reads NY. The disordered stretch occupies residues 470-498; that stretch reads AAEAAAADGDTAAADRAAATAKPAPATGE.

This sequence in the N-terminal section; belongs to the N-acetylglucosamine-1-phosphate uridyltransferase family. In the C-terminal section; belongs to the transferase hexapeptide repeat family. In terms of assembly, homotrimer. It depends on Mg(2+) as a cofactor.

The protein resides in the cytoplasm. The enzyme catalyses alpha-D-glucosamine 1-phosphate + acetyl-CoA = N-acetyl-alpha-D-glucosamine 1-phosphate + CoA + H(+). It catalyses the reaction N-acetyl-alpha-D-glucosamine 1-phosphate + UTP + H(+) = UDP-N-acetyl-alpha-D-glucosamine + diphosphate. The protein operates within nucleotide-sugar biosynthesis; UDP-N-acetyl-alpha-D-glucosamine biosynthesis; N-acetyl-alpha-D-glucosamine 1-phosphate from alpha-D-glucosamine 6-phosphate (route II): step 2/2. It participates in nucleotide-sugar biosynthesis; UDP-N-acetyl-alpha-D-glucosamine biosynthesis; UDP-N-acetyl-alpha-D-glucosamine from N-acetyl-alpha-D-glucosamine 1-phosphate: step 1/1. It functions in the pathway bacterial outer membrane biogenesis; LPS lipid A biosynthesis. Catalyzes the last two sequential reactions in the de novo biosynthetic pathway for UDP-N-acetylglucosamine (UDP-GlcNAc). The C-terminal domain catalyzes the transfer of acetyl group from acetyl coenzyme A to glucosamine-1-phosphate (GlcN-1-P) to produce N-acetylglucosamine-1-phosphate (GlcNAc-1-P), which is converted into UDP-GlcNAc by the transfer of uridine 5-monophosphate (from uridine 5-triphosphate), a reaction catalyzed by the N-terminal domain. This chain is Bifunctional protein GlmU, found in Mycolicibacterium gilvum (strain PYR-GCK) (Mycobacterium gilvum (strain PYR-GCK)).